Here is a 238-residue protein sequence, read N- to C-terminus: Thymidine kinase a (238 aa).

ATP is bound by residues 38-45 (GPMFSGKS), 70-72 (DTR), and 115-118 (DEAQ). Glu116 acts as the Proton acceptor in catalysis. A substrate-binding site is contributed by Tyr147. Residues Cys172 and Cys175 each contribute to the Zn(2+) site. Substrate-binding positions include 191–195 (TELIG) and Tyr200. Cys204 serves as a coordination point for Zn(2+).

This sequence belongs to the thymidine kinase family. As to quaternary structure, monomer and dimer. Dimerization is stimulated by ATP. In terms of tissue distribution, expressed ubiquitously.

The protein localises to the cytoplasm. The catalysed reaction is thymidine + ATP = dTMP + ADP + H(+). The protein operates within purine metabolism. It participates in pyrimidine metabolism. Its function is as follows. Part of the salvage pathway for purine and pyrimidine deoxyribonucleotide synthesis. Phosphorylates preferentially purines over pyrimidines. Mediates tolerance to genotoxins, such as ultraviolet-C (UV-C) irradiation, MMC, a DNA crosslinker, and ZEO, a DNA intercalator, that induce double-strand breaks and thus contributes to several DNA repair pathways by providing deoxythymidine triphosphate that serve as precursors for DNA repair and to balance deoxyribonucleotides pools. The chain is Thymidine kinase a from Arabidopsis thaliana (Mouse-ear cress).